A 669-amino-acid chain; its full sequence is RNA-binding protein 14 (669 aa).

RRM domains lie at 1–73 and 79–149; these read MKIF…MSRP and WKIF…LSTK. Glycyl lysine isopeptide (Lys-Gly) (interchain with G-Cter in SUMO2) cross-links involve residues Lys-126, Lys-135, Lys-138, Lys-149, and Lys-153. Disordered stretches follow at residues 147–175 and 193–232; these read STKG…DTAF and NSTG…PLTA. Ser-161 carries the phosphoserine modification. Residue Lys-164 is modified to N6-acetyllysine; alternate. Residue Lys-164 forms a Glycyl lysine isopeptide (Lys-Gly) (interchain with G-Cter in SUMO2); alternate linkage. At Thr-206 the chain carries Phosphothreonine. 6 positions are modified to phosphoserine: Ser-220, Ser-242, Ser-244, Ser-256, Ser-272, and Ser-280. A disordered region spans residues 284–303; the sequence is PYRGQLASPSSQSAAASSLG. The span at 287 to 303 shows a compositional bias: low complexity; that stretch reads GQLASPSSQSAAASSLG. The segment at 307 to 354 is TRBP-interacting domain; interaction with STIL; the sequence is GAQPSASALSSYGGQAAAASSLNSYGAQGSSLASYGNQPSSYGAQAAS. Ser-520, Ser-523, Ser-527, and Ser-562 each carry phosphoserine. The interval 566–592 is disordered; sequence VANANSTPPPYERTRLSPPRASYDDPY. Residue Thr-572 is modified to Phosphothreonine. Ser-582 is modified (phosphoserine). Lys-600 is covalently cross-linked (Glycyl lysine isopeptide (Lys-Gly) (interchain with G-Cter in SUMO2)). Ser-618, Ser-620, Ser-623, Ser-627, Ser-643, and Ser-649 each carry phosphoserine.

As to quaternary structure, interacts with NCOA6, CITED1 and XRCC5/KU86. Interacts with SS18. Interacts with STIL and interferes with its interaction with CPAP. Interacts with gamma-tubulin. Part of the HDP-RNP complex composed of at least HEXIM1, PRKDC, XRCC5, XRCC6, paraspeckle proteins (SFPQ, NONO, PSPC1, RBM14, and MATR3) and NEAT1 RNA.

It is found in the nucleus. The protein resides in the nucleolus. It localises to the cytoplasm. Functionally, may function as a nuclear receptor coactivator, enhancing transcription through other coactivators such as NCOA6 and CITED1. Regulates centriole biogenesis by suppressing the formation of aberrant centriolar protein complexes in the cytoplasm and thus preserving mitotic spindle integrity. Prevents the formation of the STIL-CPAP complex (which can induce the formation of aberrant centriolar protein complexes) by interfering with the interaction of STIL with CPAP. Plays a role in the regulation of DNA virus-mediated innate immune response by assembling into the HDP-RNP complex, a complex that serves as a platform for IRF3 phosphorylation and subsequent innate immune response activation through the cGAS-STING pathway. The protein is RNA-binding protein 14 (RBM14) of Pongo abelii (Sumatran orangutan).